We begin with the raw amino-acid sequence, 275 residues long: Large ribosomal subunit protein uL2 (275 aa).

Disordered regions lie at residues 36–55 (KQSK…RHQG) and 223–275 (VAMN…RHKR). Polar residues predominate over residues 39-48 (KNAGRNNSGR). A compositionally biased stretch (basic and acidic residues) spans 229–239 (DHPHGGGEGRT).

The protein belongs to the universal ribosomal protein uL2 family. In terms of assembly, part of the 50S ribosomal subunit. Forms a bridge to the 30S subunit in the 70S ribosome.

In terms of biological role, one of the primary rRNA binding proteins. Required for association of the 30S and 50S subunits to form the 70S ribosome, for tRNA binding and peptide bond formation. It has been suggested to have peptidyltransferase activity; this is somewhat controversial. Makes several contacts with the 16S rRNA in the 70S ribosome. The polypeptide is Large ribosomal subunit protein uL2 (Aromatoleum aromaticum (strain DSM 19018 / LMG 30748 / EbN1) (Azoarcus sp. (strain EbN1))).